The following is a 486-amino-acid chain: Cardiolipin synthase A (486 aa).

Transmembrane regions (helical) follow at residues 3–23 (TFYTVISWLSVFGYWLLIAGV) and 38–58 (MAWLLIIYILPLVGIIAYLSF). 2 PLD phosphodiesterase domains span residues 219 to 246 (MDLRQHRKIVLIDNYVAYTGSMNMVDPR) and 399 to 426 (EGGLLHSKSVLVDGQLSLVGTVNLDMRS). Catalysis depends on residues His-224, Lys-226, Asp-231, His-404, Lys-406, and Asp-411.

This sequence belongs to the phospholipase D family. Cardiolipin synthase subfamily. ClsA sub-subfamily.

The protein localises to the cell inner membrane. The enzyme catalyses 2 a 1,2-diacyl-sn-glycero-3-phospho-(1'-sn-glycerol) = a cardiolipin + glycerol. In terms of biological role, catalyzes the reversible phosphatidyl group transfer from one phosphatidylglycerol molecule to another to form cardiolipin (CL) (diphosphatidylglycerol) and glycerol. In Yersinia pseudotuberculosis serotype O:1b (strain IP 31758), this protein is Cardiolipin synthase A.